Reading from the N-terminus, the 361-residue chain is Phosphoserine aminotransferase (361 aa).

An L-glutamate-binding site is contributed by arginine 42. Pyridoxal 5'-phosphate is bound by residues 76–77 (AR), tryptophan 102, threonine 153, aspartate 173, and glutamine 196. The residue at position 197 (lysine 197) is an N6-(pyridoxal phosphate)lysine. Pyridoxal 5'-phosphate is bound at residue 238–239 (NT).

It belongs to the class-V pyridoxal-phosphate-dependent aminotransferase family. SerC subfamily. As to quaternary structure, homodimer. Requires pyridoxal 5'-phosphate as cofactor.

It localises to the cytoplasm. It carries out the reaction O-phospho-L-serine + 2-oxoglutarate = 3-phosphooxypyruvate + L-glutamate. The enzyme catalyses 4-(phosphooxy)-L-threonine + 2-oxoglutarate = (R)-3-hydroxy-2-oxo-4-phosphooxybutanoate + L-glutamate. Its pathway is amino-acid biosynthesis; L-serine biosynthesis; L-serine from 3-phospho-D-glycerate: step 2/3. The protein operates within cofactor biosynthesis; pyridoxine 5'-phosphate biosynthesis; pyridoxine 5'-phosphate from D-erythrose 4-phosphate: step 3/5. Its function is as follows. Catalyzes the reversible conversion of 3-phosphohydroxypyruvate to phosphoserine and of 3-hydroxy-2-oxo-4-phosphonooxybutanoate to phosphohydroxythreonine. This chain is Phosphoserine aminotransferase, found in Yersinia pestis bv. Antiqua (strain Angola).